The following is a 463-amino-acid chain: Toxin CaTX-A (463 aa).

The N-terminal stretch at 1–18 is a signal peptide; sequence MSRGYSLHLVLFLVLSTA.

Belongs to the jellyfish toxin family. Type II subfamily. As to quaternary structure, oligomer. Post-translationally, contains disulfide bonds. It is suggested that CaTX-B is synthesized in the tentacle, is modified (become CaTX-A) and then migrates to the nematocyst.

The protein resides in the secreted. It is found in the nematocyst. It localises to the target cell membrane. In terms of biological role, has potent hemolytic activity. Is lethal to crayfish. Causes cutaneous inflammation in humans. May act as a pore-forming toxin, disrupting normal transmembrane ion concentration gradients in susceptible cells. This Carybdea alata (Hawaiian box jellyfish) protein is Toxin CaTX-A.